Consider the following 411-residue polypeptide: Peptidase T (411 aa).

H78 provides a ligand contact to Zn(2+). The active site involves D80. D140 serves as a coordination point for Zn(2+). The active-site Proton acceptor is E173. Zn(2+) is bound by residues E174, D196, and H379.

The protein belongs to the peptidase M20B family. The cofactor is Zn(2+).

It localises to the cytoplasm. The enzyme catalyses Release of the N-terminal residue from a tripeptide.. In terms of biological role, cleaves the N-terminal amino acid of tripeptides. This chain is Peptidase T, found in Yersinia pseudotuberculosis serotype O:1b (strain IP 31758).